The chain runs to 62 residues: UPF0370 protein ESA_00777 (62 aa).

A helical transmembrane segment spans residues 4 to 24 (LGKYWWVLVLVFLLGVLLNVI). Residues 36-51 (MDNRPELPPHRDFNDK) show a composition bias toward basic and acidic residues. Positions 36-62 (MDNRPELPPHRDFNDKWDDEDDWPKKK) are disordered. The segment covering 52–62 (WDDEDDWPKKK) has biased composition (acidic residues).

It belongs to the UPF0370 family.

It is found in the cell membrane. The chain is UPF0370 protein ESA_00777 from Cronobacter sakazakii (strain ATCC BAA-894) (Enterobacter sakazakii).